Here is a 243-residue protein sequence, read N- to C-terminus: MLLIPAIDLKDGKCVRLRQGRMEDDTVFSDDPVAVAGRWVAAGARRLHLVDLDGAFAGKPRNAETIHAIREACPDVEIQVGGGIRDEETIQGYLNAGVDFVIIGTKAVSAPHFVSDVTAEFPNHIIIGLDARDGKVAIDGWSKLSHHDVIDLAQKFEADGVEAIIYTDISRDGMMGGVNIEATSRLARAIHIPVIASGGITTIDDIKALGEIVGDGVIGAITGRAIYEGTLDFAEGLKLAETF.

Catalysis depends on D8, which acts as the Proton acceptor. The active-site Proton donor is D130.

It belongs to the HisA/HisF family.

Its subcellular location is the cytoplasm. The enzyme catalyses 1-(5-phospho-beta-D-ribosyl)-5-[(5-phospho-beta-D-ribosylamino)methylideneamino]imidazole-4-carboxamide = 5-[(5-phospho-1-deoxy-D-ribulos-1-ylimino)methylamino]-1-(5-phospho-beta-D-ribosyl)imidazole-4-carboxamide. The protein operates within amino-acid biosynthesis; L-histidine biosynthesis; L-histidine from 5-phospho-alpha-D-ribose 1-diphosphate: step 4/9. The chain is 1-(5-phosphoribosyl)-5-[(5-phosphoribosylamino)methylideneamino] imidazole-4-carboxamide isomerase from Methylococcus capsulatus (strain ATCC 33009 / NCIMB 11132 / Bath).